The following is a 351-amino-acid chain: Basic salivary proline-rich protein 3 (351 aa).

Positions 1–16 are cleaved as a signal peptide; sequence MLLILLSVALLALSSA. Pyrrolidone carboxylic acid is present on Gln17. The tract at residues 17–351 is disordered; that stretch reads QSLNEDVSQE…HRPPQGQPPQ (335 aa). A compositionally biased stretch (polar residues) spans 20 to 31; the sequence is NEDVSQEESPSV. A Phosphoserine modification is found at Ser24. Tandem repeats lie at residues 53–73, 74–94, 95–115, 116–136, 137–157, 158–178, 179–199, 200–220, 221–241, 242–261, 263–283, and 284–304. A 12 X 21 AA tandem repeats of [RHP]-P-G-K-P-[EQ]-G-[PQS]-P-[PS]-Q-[GE]-G-N-[QK]-[SP]-[QR]-[GR]-P-P-P region spans residues 53-304; that stretch reads PPGKPEGRPP…EGNKPQRPPP (252 aa). Asn66 carries N-linked (GlcNAc...) asparagine glycosylation. The segment covering 70-84 has biased composition (pro residues); that stretch reads GPPPRPGKPEGPPPQ. The N-linked (GlcNAc...) asparagine glycan is linked to Asn87. The O-linked (Hex) serine glycan is linked to Ser89. The segment covering 99–111 has biased composition (low complexity); the sequence is PEGQPPQGGNQSQ. Asn108 is a glycosylation site (N-linked (GlcNAc...) asparagine). A compositionally biased stretch (pro residues) spans 112-126; sequence GPPPRPGKPEGPPPQ. Asn129 carries an N-linked (GlcNAc...) asparagine glycan. Residues 133–147 are compositionally biased toward pro residues; sequence GPPPRPGKPEGPPPQ. N-linked (GlcNAc...) asparagine glycosylation occurs at Asn150. Pro residues-rich tracts occupy residues 154-168 and 175-189; these read GPPPRPGKPEGPPPQ and GPPPHPGKPEGPPPQ. Asn192 is a glycosylation site (N-linked (GlcNAc...) asparagine). Residues 196-210 are compositionally biased toward pro residues; that stretch reads GPPPRPGKPEGPPPQ. N-linked (GlcNAc...) asparagine glycans are attached at residues Asn213 and Asn234. Composition is skewed to pro residues over residues 217 to 252, 259 to 270, and 279 to 351; these read GPPPRPGKPEGPPPQGGNKPQGPPPRPGKPEGPPPQ, GPPPRPGKPEGP, and QGPP…QPPQ. Asn297 carries an N-linked (Hex) asparagine; atypical glycan.

Post-translationally, N- and O-glycosylated; contains about 50% carbohydrate. This is composed of highly fucosylated N-linked saccharides, the major structure is a biantennary asialosaccharide containing 2 fucose residues on one antenna and an unsubstituted terminal lactosamine sequence on the other. The Gram-negative bacterium F.nucleatum binds to carbohydrates containing unsubstituted GalBeta1,4GlcNAc residues. N-glycosylation on Asn-87 is prevalent in head and neck cancer patients. Proteolytically cleaved at the tripeptide Xaa-Pro-Gln, where Xaa in the P(3) position is mostly lysine. The endoprotease may be of microbial origin. Besides on the N-terminal of mature PRB3, pyroglutamate formation found on at least Gln-67, Gln-88, Gln-256 and Gln-337.

The protein localises to the secreted. In terms of biological role, acts as a receptor for the Gram-negative bacterium F.nucleatum. The protein is Basic salivary proline-rich protein 3 (PRB3) of Homo sapiens (Human).